Consider the following 100-residue polypeptide: NADH-quinone oxidoreductase subunit K (100 aa).

A run of 3 helical transmembrane segments spans residues 4-24, 28-48, and 60-80; these read LTHG…GLVI, LLFM…AFVV, and VMYI…LALL.

This sequence belongs to the complex I subunit 4L family. In terms of assembly, NDH-1 is composed of 13 different subunits. Subunits NuoA, H, J, K, L, M, N constitute the membrane sector of the complex.

It localises to the cell inner membrane. The enzyme catalyses a quinone + NADH + 5 H(+)(in) = a quinol + NAD(+) + 4 H(+)(out). NDH-1 shuttles electrons from NADH, via FMN and iron-sulfur (Fe-S) centers, to quinones in the respiratory chain. The immediate electron acceptor for the enzyme in this species is believed to be ubiquinone. Couples the redox reaction to proton translocation (for every two electrons transferred, four hydrogen ions are translocated across the cytoplasmic membrane), and thus conserves the redox energy in a proton gradient. The chain is NADH-quinone oxidoreductase subunit K from Salmonella agona (strain SL483).